The sequence spans 492 residues: Protein adenylyltransferase Fic (492 aa).

Residues 1-18 are compositionally biased toward low complexity; sequence MGTEAEQPSPPAQQQDQE. The segment at 1-26 is disordered; the sequence is MGTEAEQPSPPAQQQDQENPPLCKAQ. Residues 33–55 traverse the membrane as a helical segment; that stretch reads LYRFVLIFVAGSLAAWTFHALSS. TPR repeat units follow at residues 118 to 151 and 152 to 186; these read ALGA…APRH and PEVL…SPSN. The short motif at 243 to 248 is the Inhibitory (S/T)XXXE(G/N) motif element; the sequence is SVGIEG. ATP is bound by residues Glu247 and 328–331; that span reads VGGH. A Fido domain is found at 297–432; that stretch reads ITIKDILELH…IRPFVRFIAD (136 aa). Residue His375 is part of the active site. ATP contacts are provided by residues 379-386, 411-412, and Asn419; these read DGNGRTSR and YY.

Belongs to the fic family. Homodimer; homodimerization may regulate adenylyltransferase and phosphodiesterase activities.

The protein resides in the membrane. The catalysed reaction is L-tyrosyl-[protein] + ATP = O-(5'-adenylyl)-L-tyrosyl-[protein] + diphosphate. It catalyses the reaction L-threonyl-[protein] + ATP = 3-O-(5'-adenylyl)-L-threonyl-[protein] + diphosphate. It carries out the reaction 3-O-(5'-adenylyl)-L-threonyl-[protein] + H2O = L-threonyl-[protein] + AMP + H(+). Its activity is regulated as follows. The side chain of Glu-247 determines which of the two opposing activities (AMPylase or de-AMPylase) will take place. In response to endoplasmic reticulum stress, mediates de-AMPylase activity. Adenylyltransferase activity is inhibited by the inhibitory helix present at the N-terminus: Glu-247 binds ATP and competes with ATP-binding at Arg-386, thereby preventing adenylyltransferase activity. In unstressed cells, disengagement of Glu-247 promotes adenylyltransferase activity. Activation dissociates ATP-binding from Glu-247, allowing ordered binding of the entire ATP moiety with the alpha-phosphate in an orientation that is productive for accepting an incoming target hydroxyl side chain. Functionally, protein that can both mediate the addition of adenosine 5'-monophosphate (AMP) to specific residues of target proteins (AMPylation), and the removal of the same modification from target proteins (de-AMPylation), depending on the context. The side chain of Glu-247 determines which of the two opposing activities (AMPylase or de-AMPylase) will take place. Acts as a key regulator of the unfolded protein response (UPR) by mediating AMPylation or de-AMPylation of Hsc70-3/BiP. In unstressed cells, acts as an adenylyltransferase by mediating AMPylation of Hsc70-3/BiP at 'Thr-518', thereby inactivating it. In response to endoplasmic reticulum stress, acts as a phosphodiesterase by mediating removal of ATP (de-AMPylation) from Hsc70-3/BiP at 'Thr-518', leading to restore HSPA5/BiP activity. The chain is Protein adenylyltransferase Fic from Drosophila melanogaster (Fruit fly).